The primary structure comprises 75 residues: DNA-directed RNA polymerase subunit omega (75 aa).

This sequence belongs to the RNA polymerase subunit omega family. In terms of assembly, in cyanobacteria the RNAP catalytic core is composed of 2 alpha, 1 beta, 1 beta', 1 gamma and 1 omega subunit. When a sigma factor is associated with the core the holoenzyme is formed, which can initiate transcription.

The enzyme catalyses RNA(n) + a ribonucleoside 5'-triphosphate = RNA(n+1) + diphosphate. In terms of biological role, promotes RNA polymerase assembly. Latches the N- and C-terminal regions of the beta' subunit thereby facilitating its interaction with the beta and alpha subunits. The protein is DNA-directed RNA polymerase subunit omega of Picosynechococcus sp. (strain ATCC 27264 / PCC 7002 / PR-6) (Agmenellum quadruplicatum).